The primary structure comprises 344 residues: Biotin synthase (344 aa).

Positions 40–267 constitute a Radical SAM core domain; that stretch reads AEVQVSTLLS…KSMVRLSAGR (228 aa). Residues Cys55, Cys59, and Cys62 each coordinate [4Fe-4S] cluster. [2Fe-2S] cluster-binding residues include Cys99, Cys130, Cys190, and Arg262.

Belongs to the radical SAM superfamily. Biotin synthase family. As to quaternary structure, homodimer. Requires [4Fe-4S] cluster as cofactor. [2Fe-2S] cluster serves as cofactor.

It carries out the reaction (4R,5S)-dethiobiotin + (sulfur carrier)-SH + 2 reduced [2Fe-2S]-[ferredoxin] + 2 S-adenosyl-L-methionine = (sulfur carrier)-H + biotin + 2 5'-deoxyadenosine + 2 L-methionine + 2 oxidized [2Fe-2S]-[ferredoxin]. Its pathway is cofactor biosynthesis; biotin biosynthesis; biotin from 7,8-diaminononanoate: step 2/2. In terms of biological role, catalyzes the conversion of dethiobiotin (DTB) to biotin by the insertion of a sulfur atom into dethiobiotin via a radical-based mechanism. In Xanthomonas campestris pv. campestris (strain 8004), this protein is Biotin synthase.